A 185-amino-acid polypeptide reads, in one-letter code: Protein GrpE (185 aa).

Residues 1–12 (MADEQLNEKDLN) show a composition bias toward basic and acidic residues. The disordered stretch occupies residues 1 to 22 (MADEQLNEKDLNVEETGAGNAA).

Belongs to the GrpE family. Homodimer.

It localises to the cytoplasm. Its function is as follows. Participates actively in the response to hyperosmotic and heat shock by preventing the aggregation of stress-denatured proteins, in association with DnaK and GrpE. It is the nucleotide exchange factor for DnaK and may function as a thermosensor. Unfolded proteins bind initially to DnaJ; upon interaction with the DnaJ-bound protein, DnaK hydrolyzes its bound ATP, resulting in the formation of a stable complex. GrpE releases ADP from DnaK; ATP binding to DnaK triggers the release of the substrate protein, thus completing the reaction cycle. Several rounds of ATP-dependent interactions between DnaJ, DnaK and GrpE are required for fully efficient folding. This is Protein GrpE from Pseudomonas putida (strain ATCC 700007 / DSM 6899 / JCM 31910 / BCRC 17059 / LMG 24140 / F1).